We begin with the raw amino-acid sequence, 633 residues long: DNA mismatch repair protein MutL (633 aa).

2 disordered regions span residues 337–364 (RPDDQLAPPGATSLTEPRPTGAAAGEFG) and 383–405 (VGWSGGSSASGGSSGYSAYTRPE). Residues 385 to 396 (WSGGSSASGGSS) are compositionally biased toward gly residues.

It belongs to the DNA mismatch repair MutL/HexB family.

Its function is as follows. This protein is involved in the repair of mismatches in DNA. It is required for dam-dependent methyl-directed DNA mismatch repair. May act as a 'molecular matchmaker', a protein that promotes the formation of a stable complex between two or more DNA-binding proteins in an ATP-dependent manner without itself being part of a final effector complex. This chain is DNA mismatch repair protein MutL, found in Pseudomonas aeruginosa (strain LESB58).